Consider the following 187-residue polypeptide: Elongation factor P (187 aa).

It belongs to the elongation factor P family.

The protein resides in the cytoplasm. It functions in the pathway protein biosynthesis; polypeptide chain elongation. Functionally, involved in peptide bond synthesis. Stimulates efficient translation and peptide-bond synthesis on native or reconstituted 70S ribosomes in vitro. Probably functions indirectly by altering the affinity of the ribosome for aminoacyl-tRNA, thus increasing their reactivity as acceptors for peptidyl transferase. The chain is Elongation factor P from Mycoplasmopsis agalactiae (strain NCTC 10123 / CIP 59.7 / PG2) (Mycoplasma agalactiae).